Here is a 447-residue protein sequence, read N- to C-terminus: Xylose isomerase (447 aa).

Catalysis depends on residues His-102 and Asp-105. The Mg(2+) site is built by Glu-233, Glu-269, His-272, Asp-297, Asp-308, Asp-310, and Asp-340.

Belongs to the xylose isomerase family. In terms of assembly, homotetramer. Requires Mg(2+) as cofactor.

Its subcellular location is the cytoplasm. The catalysed reaction is alpha-D-xylose = alpha-D-xylulofuranose. In Pediococcus pentosaceus (strain ATCC 25745 / CCUG 21536 / LMG 10740 / 183-1w), this protein is Xylose isomerase.